Here is a 1167-residue protein sequence, read N- to C-terminus: Kinesin-like protein KIN-14M (1167 aa).

The disordered stretch occupies residues 93–130 (PRKENDPGTQNSEGRRKIPKNPAMSEPSSPLSQTTLSS). Positions 117-130 (SEPSSPLSQTTLSS) are enriched in low complexity. 3 coiled-coil regions span residues 271 to 333 (VHQM…KEEM), 366 to 398 (AKYRNEIIKLMKEKEDSNDTIMKLNIELEAMKS), and 432 to 489 (KQEL…ESRS). The Kinesin motor domain occupies 572 to 900 (NIRVHCRIRP…LKFADRVSGV (329 aa)). 656–663 (GQTGSGKT) is an ATP binding site. The stretch at 907–944 (ANKEGKDIKEFKEQLSLLKDKIAKKDEEISRLQLQSHN) forms a coiled coil. 2 disordered regions span residues 955–974 (SLLKHSSSSPGISSLGSKIQ) and 1083–1167 (PDQD…KRWT). Residues 958 to 972 (KHSSSSPGISSLGSK) show a composition bias toward low complexity. Composition is skewed to polar residues over residues 1113-1124 (ASRTTTPKTPQS) and 1151-1167 (TQATSSSRNSSTQKRWT).

This sequence belongs to the TRAFAC class myosin-kinesin ATPase superfamily. Kinesin family. KIN-14 subfamily.

This Oryza sativa subsp. japonica (Rice) protein is Kinesin-like protein KIN-14M.